A 187-amino-acid polypeptide reads, in one-letter code: Adenylate kinase (187 aa).

10-15 (GSGKGT) contributes to the ATP binding site. An NMP region spans residues 30-59 (STGDLLRAEVAAGSPLGLKAKEVMARGDLV). AMP contacts are provided by residues Thr-31, Arg-36, 57 to 59 (DLV), 85 to 88 (GYPR), and Gln-92. The interval 126 to 136 (GRAKAEGREDD) is LID. An ATP-binding site is contributed by Arg-127. The AMP site is built by Arg-133 and Arg-144. Gly-172 is a binding site for ATP.

It belongs to the adenylate kinase family. As to quaternary structure, monomer.

The protein resides in the cytoplasm. The catalysed reaction is AMP + ATP = 2 ADP. It participates in purine metabolism; AMP biosynthesis via salvage pathway; AMP from ADP: step 1/1. Functionally, catalyzes the reversible transfer of the terminal phosphate group between ATP and AMP. Plays an important role in cellular energy homeostasis and in adenine nucleotide metabolism. The chain is Adenylate kinase from Xanthomonas oryzae pv. oryzae (strain MAFF 311018).